Reading from the N-terminus, the 320-residue chain is Cytochrome f (320 aa).

The signal sequence occupies residues 1-35 (MQTKNTFSWIKKEIIRSISVSLMIYIIARTSISNA). Y36, C56, C59, and H60 together coordinate heme. Residues 286–306 (VQGLLFFLASVILAQIFLVLK) traverse the membrane as a helical segment.

The protein belongs to the cytochrome f family. In terms of assembly, the 4 large subunits of the cytochrome b6-f complex are cytochrome b6, subunit IV (17 kDa polypeptide, petD), cytochrome f and the Rieske protein, while the 4 small subunits are PetG, PetL, PetM and PetN. The complex functions as a dimer. Heme is required as a cofactor.

The protein localises to the plastid. Its subcellular location is the chloroplast thylakoid membrane. Its function is as follows. Component of the cytochrome b6-f complex, which mediates electron transfer between photosystem II (PSII) and photosystem I (PSI), cyclic electron flow around PSI, and state transitions. This Eucalyptus globulus subsp. globulus (Tasmanian blue gum) protein is Cytochrome f.